Consider the following 127-residue polypeptide: Large ribosomal subunit protein mL55 (127 aa).

The N-terminal 32 residues, M1–A32, are a transit peptide targeting the mitochondrion. S84 carries the phosphoserine modification.

It belongs to the mitochondrion-specific ribosomal protein mL55 family. Component of the mitochondrial ribosome large subunit (39S) which comprises a 16S rRNA and about 50 distinct proteins.

It is found in the mitochondrion. This chain is Large ribosomal subunit protein mL55 (Mrpl55), found in Mus musculus (Mouse).